Here is a 546-residue protein sequence, read N- to C-terminus: MSIDASPSESVLESQTPDRVDESIPIKAEETEKDAAPGRDIVGFRWLLVCIAVFSANLLYGLDNTIVADIQAPIAGDFNEYTRLGWLGVGFTLGSVVFILPLGKAYAIFDTKWLFLGCLTMFAAGSALCGAAPSMNAIIVGRVWAGAGGAGMYLGNLNLITILTTPKEQPVYVGLVGLIYGTGCILGPIIGGAFSDSSATWRWSFYLNLVIFGVMSPIYVFLLPSLPRPAGEGRSFFKKLVELDWVGTVLSAGMHISIILFIVFGGVEWSWTDGRNIALYVVSAVLTIAFVLSQYFCIGTTKQDRLFPGEFLRDPTMLLLYIIMACGGAALFVAVYYIPLYFQFVHGDSGIMSAVRLLPFVCFYVATILLCGYVMPKTGYFIIWYLMSGVFMLIGAVLMYTVKLDTSPSNVYGYSILMGLGMTTTQAAYAVGPAIVTPDRVAECLQFMNIGQGQSQLLGLAIASAIFQTKTLSGLTALLGDKGYSQVDIQSAVAGAQSTLMERLPPALKTAALKVIVSSISDVYVMAISAGALYVVASCLLPRRRF.

Over residues 1 to 15 the composition is skewed to polar residues; sequence MSIDASPSESVLESQ. Residues 1–29 are disordered; sequence MSIDASPSESVLESQTPDRVDESIPIKAE. Over residues 16-29 the composition is skewed to basic and acidic residues; it reads TPDRVDESIPIKAE. Helical transmembrane passes span 41–61, 89–109, 113–133, 143–163, 171–191, 203–223, 245–265, 277–297, 318–338, 350–370, 379–399, 416–436, 447–467, and 515–535; these read IVGF…LLYG, VGFT…YAIF, WLFL…GAAP, VWAG…ITIL, VYVG…PIIG, WSFY…VFLL, WVGT…IVFG, IALY…QYFC, LLLY…VYYI, GIMS…TILL, GYFI…AVLM, ILMG…PAIV, FMNI…SAIF, and VIVS…ALYV.

This sequence belongs to the major facilitator superfamily. TCR/Tet family.

Its subcellular location is the vacuole membrane. It localises to the cell membrane. MFS-type transporter; part of the gene cluster that mediates the biosynthesis of patulin, an acetate-derived tetraketide mycotoxin produced by several fungal species that shows antimicrobial properties against several bacteria. May be involved in the secretion of E-ascladiol to be converted to patulin by the secreted patulin synthase patE. In Penicillium expansum (Blue mold rot fungus), this protein is MFS-type transporter patC.